The chain runs to 147 residues: Ribosome-binding factor A (147 aa).

A disordered region spans residues 126-147 (LKKNAQPAGDAHPYKDDDAMND). The segment covering 137–147 (HPYKDDDAMND) has biased composition (basic and acidic residues).

This sequence belongs to the RbfA family. In terms of assembly, monomer. Binds 30S ribosomal subunits, but not 50S ribosomal subunits or 70S ribosomes.

It localises to the cytoplasm. Its function is as follows. One of several proteins that assist in the late maturation steps of the functional core of the 30S ribosomal subunit. Associates with free 30S ribosomal subunits (but not with 30S subunits that are part of 70S ribosomes or polysomes). Required for efficient processing of 16S rRNA. May interact with the 5'-terminal helix region of 16S rRNA. The sequence is that of Ribosome-binding factor A from Corynebacterium diphtheriae (strain ATCC 700971 / NCTC 13129 / Biotype gravis).